A 308-amino-acid polypeptide reads, in one-letter code: Ribosomal RNA small subunit methyltransferase H (308 aa).

Residues 32–34 (AGH), Asp-52, Phe-79, Asp-100, and Gln-107 contribute to the S-adenosyl-L-methionine site.

Belongs to the methyltransferase superfamily. RsmH family.

It is found in the cytoplasm. It catalyses the reaction cytidine(1402) in 16S rRNA + S-adenosyl-L-methionine = N(4)-methylcytidine(1402) in 16S rRNA + S-adenosyl-L-homocysteine + H(+). Functionally, specifically methylates the N4 position of cytidine in position 1402 (C1402) of 16S rRNA. This is Ribosomal RNA small subunit methyltransferase H from Mycoplasma mycoides subsp. mycoides SC (strain CCUG 32753 / NCTC 10114 / PG1).